A 447-amino-acid chain; its full sequence is Tubulin beta chain (447 aa).

GTP is bound by residues Q11, E69, S138, G142, T143, G144, N204, and N226. E69 contributes to the Mg(2+) binding site. Residues 419 to 447 (VSEYQQYQDATADEEGEYEDEDQEAEDDM) form a disordered region. Positions 429–447 (TADEEGEYEDEDQEAEDDM) are enriched in acidic residues.

The protein belongs to the tubulin family. In terms of assembly, dimer of alpha and beta chains. A typical microtubule is a hollow water-filled tube with an outer diameter of 25 nm and an inner diameter of 15 nM. Alpha-beta heterodimers associate head-to-tail to form protofilaments running lengthwise along the microtubule wall with the beta-tubulin subunit facing the microtubule plus end conferring a structural polarity. Microtubules usually have 13 protofilaments but different protofilament numbers can be found in some organisms and specialized cells. Mg(2+) serves as cofactor.

The protein resides in the cytoplasm. The protein localises to the cytoskeleton. Its function is as follows. Tubulin is the major constituent of microtubules, a cylinder consisting of laterally associated linear protofilaments composed of alpha- and beta-tubulin heterodimers. Microtubules grow by the addition of GTP-tubulin dimers to the microtubule end, where a stabilizing cap forms. Below the cap, tubulin dimers are in GDP-bound state, owing to GTPase activity of alpha-tubulin. This is Tubulin beta chain (TUBB) from Hordeum vulgare (Barley).